A 288-amino-acid polypeptide reads, in one-letter code: ATP synthase gamma chain (288 aa).

This sequence belongs to the ATPase gamma chain family. F-type ATPases have 2 components, CF(1) - the catalytic core - and CF(0) - the membrane proton channel. CF(1) has five subunits: alpha(3), beta(3), gamma(1), delta(1), epsilon(1). CF(0) has three main subunits: a, b and c.

The protein resides in the cell inner membrane. Functionally, produces ATP from ADP in the presence of a proton gradient across the membrane. The gamma chain is believed to be important in regulating ATPase activity and the flow of protons through the CF(0) complex. The chain is ATP synthase gamma chain from Rickettsia bellii (strain RML369-C).